The chain runs to 464 residues: 3-isopropylmalate dehydratase large subunit (464 aa).

[4Fe-4S] cluster is bound by residues C337, C397, and C400.

This sequence belongs to the aconitase/IPM isomerase family. LeuC type 1 subfamily. In terms of assembly, heterodimer of LeuC and LeuD. The cofactor is [4Fe-4S] cluster.

It catalyses the reaction (2R,3S)-3-isopropylmalate = (2S)-2-isopropylmalate. The protein operates within amino-acid biosynthesis; L-leucine biosynthesis; L-leucine from 3-methyl-2-oxobutanoate: step 2/4. Catalyzes the isomerization between 2-isopropylmalate and 3-isopropylmalate, via the formation of 2-isopropylmaleate. This Bacillus cytotoxicus (strain DSM 22905 / CIP 110041 / 391-98 / NVH 391-98) protein is 3-isopropylmalate dehydratase large subunit.